The primary structure comprises 393 residues: Branched-chain-amino-acid aminotransferase, mitochondrial (393 aa).

The N-terminal 27 residues, 1–27 (MATAALRQIWIPRFLPVPWFLCGSRRY), are a transit peptide targeting the mitochondrion. Tyr169 is a binding site for substrate. Lys230 is subject to N6-(pyridoxal phosphate)lysine. Lys322 bears the N6-acetyllysine mark.

The protein belongs to the class-IV pyridoxal-phosphate-dependent aminotransferase family. As to quaternary structure, homodimer. Pyridoxal 5'-phosphate is required as a cofactor.

Its subcellular location is the mitochondrion. The enzyme catalyses L-leucine + 2-oxoglutarate = 4-methyl-2-oxopentanoate + L-glutamate. It carries out the reaction L-isoleucine + 2-oxoglutarate = (S)-3-methyl-2-oxopentanoate + L-glutamate. It catalyses the reaction L-valine + 2-oxoglutarate = 3-methyl-2-oxobutanoate + L-glutamate. Its function is as follows. Catalyzes the first reaction in the catabolism of the essential branched chain amino acids leucine, isoleucine, and valine. May also function as a transporter of branched chain alpha-keto acids. The chain is Branched-chain-amino-acid aminotransferase, mitochondrial (BCAT2) from Bos taurus (Bovine).